The following is an 87-amino-acid chain: Potassium channel toxin Tdi-beta-KTx (87 aa).

The N-terminal stretch at 1-19 (MERKLALLLLLGMITLASS) is a signal peptide. Positions 20–27 (GLREKHVQ) are excised as a propeptide. The region spanning 53–87 (QFGCPAYEGYCMNHCQDIERHDGSCHGFKCKCEKS) is the BetaSPN-type CS-alpha/beta domain. Disulfide bonds link Cys56–Cys77, Cys63–Cys82, and Cys67–Cys84.

In terms of tissue distribution, expressed by the venom gland.

The protein resides in the secreted. Functionally, inhibits voltage-gated potassium channel. The polypeptide is Potassium channel toxin Tdi-beta-KTx (Tityus discrepans (Venezuelan scorpion)).